The chain runs to 460 residues: ATP synthase subunit beta (460 aa).

150-157 provides a ligand contact to ATP; sequence GGAGVGKT.

It belongs to the ATPase alpha/beta chains family. In terms of assembly, F-type ATPases have 2 components, CF(1) - the catalytic core - and CF(0) - the membrane proton channel. CF(1) has five subunits: alpha(3), beta(3), gamma(1), delta(1), epsilon(1). CF(0) has three main subunits: a(1), b(2) and c(9-12). The alpha and beta chains form an alternating ring which encloses part of the gamma chain. CF(1) is attached to CF(0) by a central stalk formed by the gamma and epsilon chains, while a peripheral stalk is formed by the delta and b chains.

It is found in the cell inner membrane. It carries out the reaction ATP + H2O + 4 H(+)(in) = ADP + phosphate + 5 H(+)(out). In terms of biological role, produces ATP from ADP in the presence of a proton gradient across the membrane. The catalytic sites are hosted primarily by the beta subunits. The protein is ATP synthase subunit beta of Edwardsiella ictaluri (strain 93-146).